A 436-amino-acid chain; its full sequence is MKPLIALVGRPNVGKSTLFNRILREKAAIVDPTPGVTRDRHIAEGHWQGREFRLMDTGGYAPEDGVISTAMLEQTMMAIQDADIIIFLADVRSGVSYDDLELAKILKRDFSDKPIFLAVNKAESPQLAIEAASFVSTGFTEPWAISARDGSGVADLLDEILLTFPESDGPPEEDGAIRLAVIGRPNVGKSSFVNALLGSNRQIVSSIPGTTRDAIDTRFTRKQQEFMLIDTAGLRKRTKISAGIEYYSSLRSERAIERCEVAIVMLDATPGIEKQDLKIINIAAERKRGVLLLVNKWDLVEKDSKTSKQYEESLRSHMGNLSYIPVIFTSALTKKNLYRAIDTAKEISQNRSRKISTSALNRFLEEALAANHPSTRTGKELKIKYMTQIEAPWPVFAFFCNNPELVQTNFRKFLENKLREKFSLEGVTISLRFMQK.

EngA-type G domains follow at residues 3–168 (PLIA…PESD) and 177–352 (IRLA…QNRS). GTP is bound by residues 9 to 16 (GRPNVGKS), 56 to 60 (DTGGY), 120 to 123 (NKAE), 183 to 190 (GRPNVGKS), 230 to 234 (DTAGL), and 295 to 298 (NKWD). A KH-like domain is found at 353–436 (RKISTSALNR…VTISLRFMQK (84 aa)).

The protein belongs to the TRAFAC class TrmE-Era-EngA-EngB-Septin-like GTPase superfamily. EngA (Der) GTPase family. In terms of assembly, associates with the 50S ribosomal subunit.

In terms of biological role, GTPase that plays an essential role in the late steps of ribosome biogenesis. This chain is GTPase Der, found in Chlorobium luteolum (strain DSM 273 / BCRC 81028 / 2530) (Pelodictyon luteolum).